The primary structure comprises 61 residues: Large ribosomal subunit protein uL30 (61 aa).

It belongs to the universal ribosomal protein uL30 family. In terms of assembly, part of the 50S ribosomal subunit.

In Chlorobium phaeobacteroides (strain BS1), this protein is Large ribosomal subunit protein uL30.